The chain runs to 517 residues: Gamma-1-syntrophin (517 aa).

In terms of domain architecture, PDZ spans 57–140 (TVTIRRQTVG…EVTLTVSFLK (84 aa)). The PH domain occupies 283–390 (QIVYMGWCEA…WERAFQTATF (108 aa)).

It belongs to the syntrophin family. Isoform 1, but not isoform 2, interacts with the dystrophin protein DMD and related proteins DTNA and DTNB. Interacts with DGKZ. As to expression, brain specific. In CNS, it is expressed in the perikaryon and proximal portion of the neuronal processes. Strong expression in the hippocampus, neuron-rich dendate granule cells, and pyramidal cell layers. Highly expressed in neurons of the cerebral cortex. Also expressed in the cerebellar cortex, deep cerebellar nuclei, thalamus, and basal ganglia. No expression in muscle cells.

The protein localises to the cytoplasm. Its subcellular location is the cytoskeleton. The protein resides in the nucleus. Adapter protein that binds to and probably organizes the subcellular localization of a variety of proteins. May link various receptors to the actin cytoskeleton and the dystrophin glycoprotein complex. May participate in regulating the subcellular location of diacylglycerol kinase-zeta to ensure that diacylglycerol is rapidly inactivated following receptor activation. This is Gamma-1-syntrophin (SNTG1) from Homo sapiens (Human).